The chain runs to 430 residues: Adenylosuccinate synthetase (430 aa).

GTP-binding positions include 12-18 (GDEGKGK) and 40-42 (GHT). Asp-13 (proton acceptor) is an active-site residue. Positions 13 and 40 each coordinate Mg(2+). Residues 13–16 (DEGK), 38–41 (NAGH), Thr-128, Arg-142, Gln-223, Thr-238, and Arg-302 contribute to the IMP site. The Proton donor role is filled by His-41. 298-304 (TTTGRPR) serves as a coordination point for substrate. GTP-binding positions include Arg-304, 330-332 (SID), and 412-414 (SVG).

This sequence belongs to the adenylosuccinate synthetase family. As to quaternary structure, homodimer. Mg(2+) is required as a cofactor.

The protein resides in the cytoplasm. The catalysed reaction is IMP + L-aspartate + GTP = N(6)-(1,2-dicarboxyethyl)-AMP + GDP + phosphate + 2 H(+). It functions in the pathway purine metabolism; AMP biosynthesis via de novo pathway; AMP from IMP: step 1/2. Plays an important role in the de novo pathway of purine nucleotide biosynthesis. Catalyzes the first committed step in the biosynthesis of AMP from IMP. The polypeptide is Adenylosuccinate synthetase (Exiguobacterium sibiricum (strain DSM 17290 / CCUG 55495 / CIP 109462 / JCM 13490 / 255-15)).